The following is a 234-amino-acid chain: Octanoyltransferase (234 aa).

The 185-residue stretch at 50–234 (GEAPELVWLL…AFEQVFGPTR (185 aa)) folds into the BPL/LPL catalytic domain. Residues 88 to 95 (RGGQITYH), 163 to 165 (AIG), and 176 to 178 (GIA) contribute to the substrate site. Cysteine 194 (acyl-thioester intermediate) is an active-site residue.

This sequence belongs to the LipB family.

It is found in the cytoplasm. It carries out the reaction octanoyl-[ACP] + L-lysyl-[protein] = N(6)-octanoyl-L-lysyl-[protein] + holo-[ACP] + H(+). Its pathway is protein modification; protein lipoylation via endogenous pathway; protein N(6)-(lipoyl)lysine from octanoyl-[acyl-carrier-protein]: step 1/2. Functionally, catalyzes the transfer of endogenously produced octanoic acid from octanoyl-acyl-carrier-protein onto the lipoyl domains of lipoate-dependent enzymes. Lipoyl-ACP can also act as a substrate although octanoyl-ACP is likely to be the physiological substrate. This is Octanoyltransferase from Rhodopseudomonas palustris (strain BisA53).